An 829-amino-acid polypeptide reads, in one-letter code: Leucine--tRNA ligase (829 aa).

The 'HIGH' region signature appears at 42–52 (PYPSGRIHMGH). The short motif at 584 to 588 (KMSKS) is the 'KMSKS' region element. Lys587 contributes to the ATP binding site.

Belongs to the class-I aminoacyl-tRNA synthetase family.

Its subcellular location is the cytoplasm. It carries out the reaction tRNA(Leu) + L-leucine + ATP = L-leucyl-tRNA(Leu) + AMP + diphosphate. This is Leucine--tRNA ligase from Syntrophobacter fumaroxidans (strain DSM 10017 / MPOB).